Here is a 259-residue protein sequence, read N- to C-terminus: Pimeloyl-[acyl-carrier protein] methyl ester esterase (259 aa).

Residues 15–242 (HLVLLHGWGL…AAHAPFISHP (228 aa)) enclose the AB hydrolase-1 domain. Substrate contacts are provided by residues Trp22, 82-83 (SL), and 143-147 (FLALQ). Ser82 functions as the Nucleophile in the catalytic mechanism. Residues Asp207 and His235 contribute to the active site. His235 contributes to the substrate binding site.

This sequence belongs to the AB hydrolase superfamily. Carboxylesterase BioH family. As to quaternary structure, monomer.

Its subcellular location is the cytoplasm. It carries out the reaction 6-carboxyhexanoyl-[ACP] methyl ester + H2O = 6-carboxyhexanoyl-[ACP] + methanol + H(+). It functions in the pathway cofactor biosynthesis; biotin biosynthesis. In terms of biological role, the physiological role of BioH is to remove the methyl group introduced by BioC when the pimeloyl moiety is complete. It allows to synthesize pimeloyl-ACP via the fatty acid synthetic pathway through the hydrolysis of the ester bonds of pimeloyl-ACP esters. The sequence is that of Pimeloyl-[acyl-carrier protein] methyl ester esterase from Cronobacter sakazakii (strain ATCC BAA-894) (Enterobacter sakazakii).